The primary structure comprises 226 residues: 2-dehydro-3-deoxy-phosphogluconate aldolase (226 aa).

The active-site Proton acceptor is the Glu57. Residues Arg61, Thr85, and Lys145 each contribute to the pyruvate site. The active-site Schiff-base intermediate with substrate is the Lys145.

The protein belongs to the KHG/KDPG aldolase family. As to quaternary structure, homotrimer.

It catalyses the reaction 2-dehydro-3-deoxy-6-phospho-D-gluconate = D-glyceraldehyde 3-phosphate + pyruvate. Its pathway is carbohydrate acid metabolism; 2-dehydro-3-deoxy-D-gluconate degradation; D-glyceraldehyde 3-phosphate and pyruvate from 2-dehydro-3-deoxy-D-gluconate: step 2/2. In terms of biological role, involved in the degradation of glucose via the Entner-Doudoroff pathway. Catalyzes the reversible, stereospecific retro-aldol cleavage of 2-keto-3-deoxy-6-phosphogluconate (KDPG) to pyruvate and D-glyceraldehyde-3-phosphate. The polypeptide is 2-dehydro-3-deoxy-phosphogluconate aldolase (Pseudomonas putida (Arthrobacter siderocapsulatus)).